The primary structure comprises 396 residues: Purine ribonucleoside efflux pump NepI (396 aa).

The Cytoplasmic portion of the chain corresponds to 1–21 (MSEFIAENRGANAITRPNWSA). Residues 22-42 (VFSVAFCVACLIIVEFLPVSL) traverse the membrane as a helical segment. The Periplasmic portion of the chain corresponds to 43-54 (LTPMAQDLGISE). The chain crosses the membrane as a helical span at residues 55-75 (GVAGQSVTVTAFVAMFASLFI). At 76–85 (TQTIQATDRR) the chain is on the cytoplasmic side. A helical membrane pass occupies residues 86 to 106 (YVVILFAVLLTLSCLLVSFAN). S107 is a topological domain (periplasmic). The chain crosses the membrane as a helical span at residues 108 to 128 (FSLLLIGRACLGVALGGFWAI). Over 129–147 (SASLTMRLVPPRTVPKALS) the chain is Cytoplasmic. The chain crosses the membrane as a helical span at residues 148–168 (VIFGAVSIALVIAAPLGSFLG). Over 169–175 (ELIGWRN) the chain is Periplasmic. A helical transmembrane segment spans residues 176–196 (VFNAAAAMGVLCIFWIIKSLP). The Cytoplasmic segment spans residues 197-215 (SLPGEPSHQKQNTFRLLQR). Residues 216–236 (PGVMAGMIAIFMSFAGQFAFF) traverse the membrane as a helical segment. The Periplasmic segment spans residues 237-255 (TYIRPVYMNLAGFGVDGLT). Residues 256–276 (LVLLSFGIASFVGTSLSSFIL) form a helical membrane-spanning segment. The Cytoplasmic segment spans residues 277 to 281 (KRSVK). A helical membrane pass occupies residues 282–302 (LALAGAPFVLALSALVLTLWG). Residues 303 to 305 (SDK) are Periplasmic-facing. A helical membrane pass occupies residues 306-326 (IVATGVAIIWGLTFALIPVGW). Residues 327–343 (STWITRSLADQAEKAGS) lie on the Cytoplasmic side of the membrane. Residues 344–364 (IQVAVIQLANTCGAAIGGYAL) traverse the membrane as a helical segment. At 365–366 (DN) the chain is on the periplasmic side. Residues 367–387 (IGLTSPLMLSGTLMLLTALLV) traverse the membrane as a helical segment. At 388-396 (TAKVKMKKS) the chain is on the cytoplasmic side.

It belongs to the major facilitator superfamily. DHA1 family. NepI (TC 2.A.1.2.26) subfamily.

It is found in the cell inner membrane. It carries out the reaction inosine(in) + H(+)(out) = inosine(out) + H(+)(in). The catalysed reaction is guanosine(in) + H(+)(out) = guanosine(out) + H(+)(in). Its function is as follows. Involved in the efflux of purine ribonucleosides, such as inosine and guanosine. The chain is Purine ribonucleoside efflux pump NepI from Escherichia coli O6:K15:H31 (strain 536 / UPEC).